The following is a 268-amino-acid chain: Ribosomal RNA small subunit methyltransferase A (268 aa).

Positions 16, 18, 43, 64, 89, and 110 each coordinate S-adenosyl-L-methionine.

The protein belongs to the class I-like SAM-binding methyltransferase superfamily. rRNA adenine N(6)-methyltransferase family. RsmA subfamily.

Its subcellular location is the cytoplasm. The enzyme catalyses adenosine(1518)/adenosine(1519) in 16S rRNA + 4 S-adenosyl-L-methionine = N(6)-dimethyladenosine(1518)/N(6)-dimethyladenosine(1519) in 16S rRNA + 4 S-adenosyl-L-homocysteine + 4 H(+). Functionally, specifically dimethylates two adjacent adenosines (A1518 and A1519) in the loop of a conserved hairpin near the 3'-end of 16S rRNA in the 30S particle. May play a critical role in biogenesis of 30S subunits. In Pseudomonas syringae pv. syringae (strain B728a), this protein is Ribosomal RNA small subunit methyltransferase A.